The chain runs to 558 residues: MESNNGTGAPGAFHTQQVDNAIRAIQHKRPLPEIDFTIHTMEDGSQVSTMERVCKDVQAPAMFKPSDEQFFEDETHTKPDIQFLKQHFYREGRLTEEQALWIIREGTKLLRAEPNLLEMDAPITVCGDVHGQYYDLMKLFEVGGDPAETRYLFLGDYVDRGYFSIECVLYLWALKIHYPKTLWLLRGNHECRHLTDYFTFKLECKHKYSEAIYEACMESFCCLPLAAVMNKQFLCIHGGLSPELHTLDDIRNIDRFREPPTQGLMCDILWADPLEDFGQEKTTDFFVHNHVRGCSYFFSYSAACHFLEKNNLLSIIRAHEAQDAGYRMYRKTRTTGFPSVMTIFSAPNYLDVYNNKAAVLKYENNVMNIRQFNCTPHPYWLPNFMDVFTWSLPFVGEKITDMLIAILSTCSEEELREDSATTSPGSASPALPSAANQDPDSIEFKRRAIKNKILAIGRLSRVFQVLREESERVTELKTVSGGRLPAGTLMLGAEGIKNAISSFEDARKVDLQNERLPPSHDEVVKMQDEERAQALERATREADNDKKLQTLSRRLSTS.

Fe cation contacts are provided by Asp128, His130, and Asp156. Residues Asp156 and Asn188 each coordinate Zn(2+). The active-site Proton donor is the His189. 2 residues coordinate Zn(2+): His237 and His319. Disordered regions lie at residues 415-439 (LRED…NQDP) and 534-558 (ALER…LSTS). The span at 420 to 435 (ATTSPGSASPALPSAA) shows a compositional bias: low complexity. The segment covering 534-548 (ALERATREADNDKKL) has biased composition (basic and acidic residues). Residues 549 to 558 (QTLSRRLSTS) show a composition bias toward polar residues.

This sequence belongs to the PPP phosphatase family. PP-2B subfamily. Composed of two components (A and B), the A component is the catalytic subunit and the B component confers calcium sensitivity. The cofactor is Fe(3+). Zn(2+) is required as a cofactor.

The catalysed reaction is O-phospho-L-seryl-[protein] + H2O = L-seryl-[protein] + phosphate. It catalyses the reaction O-phospho-L-threonyl-[protein] + H2O = L-threonyl-[protein] + phosphate. Its function is as follows. Calcium-dependent, calmodulin-stimulated protein phosphatase. This subunit may have a role in the calmodulin activation of calcineurin. This Neurospora crassa (strain ATCC 24698 / 74-OR23-1A / CBS 708.71 / DSM 1257 / FGSC 987) protein is Serine/threonine-protein phosphatase 2B catalytic subunit (cna-1).